The primary structure comprises 432 residues: Type I restriction enzyme MjaIX specificity subunit (432 aa).

It belongs to the type-I restriction system S methylase family. In terms of assembly, the type I restriction/modification system is composed of three polypeptides R, M and S.

Its function is as follows. The specificity (S) subunit of a type I restriction enzyme; this subunit dictates DNA sequence specificity. The M and S subunits together form a methyltransferase (MTase) that methylates A-3 on the top and A-2 on the bottom strand of the sequence 5'-CCAN(5)GTR-3'. In the presence of the R subunit the complex can also act as an endonuclease, binding to the same target sequence but cutting the DNA some distance from this site. Whether the DNA is cut or modified depends on the methylation state of the target sequence. When the target site is unmodified, the DNA is cut. When the target site is hemimethylated, the complex acts as a maintenance MTase modifying the DNA so that both strands become methylated. After locating a non-methylated recognition site, the enzyme complex serves as a molecular motor that translocates DNA in an ATP-dependent manner until a collision occurs that triggers cleavage. The polypeptide is Type I restriction enzyme MjaIX specificity subunit (hsdS) (Methanocaldococcus jannaschii (strain ATCC 43067 / DSM 2661 / JAL-1 / JCM 10045 / NBRC 100440) (Methanococcus jannaschii)).